The following is a 156-amino-acid chain: Small ribosomal subunit protein uS7 (156 aa).

The protein belongs to the universal ribosomal protein uS7 family. In terms of assembly, part of the 30S ribosomal subunit. Contacts proteins S9 and S11.

In terms of biological role, one of the primary rRNA binding proteins, it binds directly to 16S rRNA where it nucleates assembly of the head domain of the 30S subunit. Is located at the subunit interface close to the decoding center, probably blocks exit of the E-site tRNA. The protein is Small ribosomal subunit protein uS7 of Mannheimia succiniciproducens (strain KCTC 0769BP / MBEL55E).